Consider the following 215-residue polypeptide: UPF0502 protein YceH (215 aa).

Lys80 is subject to N6-acetyllysine.

This sequence belongs to the UPF0502 family.

In Shigella sonnei (strain Ss046), this protein is UPF0502 protein YceH.